A 743-amino-acid chain; its full sequence is Threonine synthase-like 1 (743 aa).

The residue at position 281 (Lys281) is an N6-acetyllysine. At Lys351 the chain carries N6-(pyridoxal phosphate)lysine.

Belongs to the threonine synthase family. Requires pyridoxal 5'-phosphate as cofactor.

This is Threonine synthase-like 1 (THNSL1) from Macaca fascicularis (Crab-eating macaque).